The primary structure comprises 213 residues: MNLLIMGLPGAGKGTQAAKIVEKFNVAHISTGDMFRAAMANQTEMGILAKSYIDKGDLVPDEVTNGIVKERLVQDDIKEKGFLLDGYPRTIEQAHALDENLADLGIELQGVINIEIDPSKLVERLSGRIIHKETGETFHKVFNPPVGDYKEEDFYQREDDKPESVKRRLEVNIAQGQPIIDHYRAKGLVHDIEGDQDIDLVFQAIDTVLSKLQ.

ATP is bound at residue 10 to 15 (GAGKGT). Residues 30 to 59 (STGDMFRAAMANQTEMGILAKSYIDKGDLV) form an NMP region. AMP is bound by residues Thr31, Arg36, 57–59 (DLV), 86–89 (GYPR), and Gln93. The LID stretch occupies residues 127-160 (GRIIHKETGETFHKVFNPPVGDYKEEDFYQREDD). ATP-binding positions include Arg128 and 137-138 (TF). AMP contacts are provided by Arg157 and Arg168. Gln196 serves as a coordination point for ATP.

Belongs to the adenylate kinase family. Monomer.

The protein localises to the cytoplasm. It carries out the reaction AMP + ATP = 2 ADP. Its pathway is purine metabolism; AMP biosynthesis via salvage pathway; AMP from ADP: step 1/1. In terms of biological role, catalyzes the reversible transfer of the terminal phosphate group between ATP and AMP. Plays an important role in cellular energy homeostasis and in adenine nucleotide metabolism. The chain is Adenylate kinase from Streptococcus suis (strain 98HAH33).